Here is a 338-residue protein sequence, read N- to C-terminus: Phenylalanine--tRNA ligase alpha subunit (338 aa).

Glu-253 contacts Mg(2+).

This sequence belongs to the class-II aminoacyl-tRNA synthetase family. Phe-tRNA synthetase alpha subunit type 1 subfamily. As to quaternary structure, tetramer of two alpha and two beta subunits. Mg(2+) serves as cofactor.

It is found in the cytoplasm. It catalyses the reaction tRNA(Phe) + L-phenylalanine + ATP = L-phenylalanyl-tRNA(Phe) + AMP + diphosphate + H(+). In Geotalea uraniireducens (strain Rf4) (Geobacter uraniireducens), this protein is Phenylalanine--tRNA ligase alpha subunit.